The following is a 433-amino-acid chain: Ornithine decarboxylase 1B, chloroplastic (433 aa).

Lysine 96 carries the N6-(pyridoxal phosphate)lysine modification. Residues serine 228, glycine 266, and 299–302 contribute to the pyridoxal 5'-phosphate site; that span reads EPGR. 342–343 contacts substrate; that stretch reads YD. Residue cysteine 378 is the Proton donor; shared with dimeric partner of the active site. A substrate-binding site is contributed by aspartate 379. Tyrosine 407 provides a ligand contact to pyridoxal 5'-phosphate.

Belongs to the Orn/Lys/Arg decarboxylase class-II family. As to quaternary structure, homodimer. Only the dimer is catalytically active, as the active sites are constructed of residues from both monomers. The cofactor is pyridoxal 5'-phosphate.

The protein resides in the plastid. Its subcellular location is the chloroplast. The catalysed reaction is L-ornithine + H(+) = putrescine + CO2. It functions in the pathway alkaloid biosynthesis; nicotine biosynthesis. The protein operates within amine and polyamine biosynthesis; putrescine biosynthesis via L-ornithine pathway; putrescine from L-ornithine: step 1/1. Its function is as follows. Involved in the biosynthesis of pyridine alkaloid natural products, leading mainly to the production of anabasine, anatabine, nicotine and nornicotine, effective deterrents against herbivores with antiparasitic and pesticide properties (neurotoxins); nornicotine serves as the precursor in the synthesis of the carcinogen compound N'-nitrosonornicotine (NNN). Catalyzes the first and rate-limiting step of polyamine biosynthesis that converts ornithine into putrescine, which is the precursor for the polyamines, spermidine and spermine. Polyamines are essential for cell proliferation and are implicated in cellular processes, ranging from DNA replication to apoptosis. In Nicotiana tabacum (Common tobacco), this protein is Ornithine decarboxylase 1B, chloroplastic.